A 384-amino-acid polypeptide reads, in one-letter code: Polar flagellin C (384 aa).

The stretch at 317–347 (AKQNRLSHSINNLANIQENVDASNSRIKDTD) forms a coiled coil.

The protein belongs to the bacterial flagellin family. As to quaternary structure, heteromer of multiple flagellin subunits including FlaA, FlaB/D, FlaC, FlaE and FlaF. Homomer of FlaC is not able to form a functional filament.

The protein localises to the secreted. It localises to the bacterial flagellum. In terms of biological role, flagellin is the subunit protein which polymerizes to form the filaments of bacterial flagella. FlaC is not essential for polar flagellar synthesis and swimming motility. Homomer of FlaC is not able to form a functional filament. In Vibrio parahaemolyticus serotype O3:K6 (strain RIMD 2210633), this protein is Polar flagellin C (flaC).